The sequence spans 162 residues: Phosphopantetheine adenylyltransferase (162 aa).

Ser-11 contacts substrate. Residues 11–12 (SF) and His-19 contribute to the ATP site. Residues Lys-43, Leu-75, and Arg-89 each coordinate substrate. ATP contacts are provided by residues 90 to 92 (GLR), Glu-100, and 125 to 131 (FSYISSS).

Belongs to the bacterial CoaD family. As to quaternary structure, homohexamer. Requires Mg(2+) as cofactor.

The protein localises to the cytoplasm. It carries out the reaction (R)-4'-phosphopantetheine + ATP + H(+) = 3'-dephospho-CoA + diphosphate. It participates in cofactor biosynthesis; coenzyme A biosynthesis; CoA from (R)-pantothenate: step 4/5. Functionally, reversibly transfers an adenylyl group from ATP to 4'-phosphopantetheine, yielding dephospho-CoA (dPCoA) and pyrophosphate. The sequence is that of Phosphopantetheine adenylyltransferase from Petrotoga mobilis (strain DSM 10674 / SJ95).